The chain runs to 485 residues: MSIRYESVEKLSEMIKNKEIKPSEVVKDIYDAIEETDPTIKSFLALDKENAMKKAEELDELQAKDQMEGKLFGIPMGIKDNIITEGLETTCASKMLEGFVPIYESTVMNKLHDENAVLIGKLNMDEFAMGGSTETSYYKKTVNPFDHTAVPGGSSGGSAAAVAAGLVPFSLGSDTGGSIRQPAAYCGIVGMKPTYGRVSRFGLVAFASSLDQIGPLTRNVKDNAIVLETIVGEDKHDSTSAPVADNDFTSDIGKDIRGMKIALPKEYLGEGVNDEVKEAVRNAVEILEGEGAIVEEVSLPNTGYGIPSYYVIASSEASSNLSRFDGIRYGFHSKEANTLDELYKLSRSEGFGKEVKRRILLGTFALSSGYYDAYYKKSQKVRTLIRQDFERVFEDYDVVVGPTTPTPAFNLGEEINDPLTMYANDLLTTPVNLAGLPGISIPCGQTNDRPIGLQFIGKPFDEKTLYRVAYQFEQQYNLHDQYQNL.

Active-site charge relay system residues include Lys79 and Ser154. Ser178 serves as the catalytic Acyl-ester intermediate.

It belongs to the amidase family. GatA subfamily. As to quaternary structure, heterotrimer of A, B and C subunits.

The catalysed reaction is L-glutamyl-tRNA(Gln) + L-glutamine + ATP + H2O = L-glutaminyl-tRNA(Gln) + L-glutamate + ADP + phosphate + H(+). Allows the formation of correctly charged Gln-tRNA(Gln) through the transamidation of misacylated Glu-tRNA(Gln) in organisms which lack glutaminyl-tRNA synthetase. The reaction takes place in the presence of glutamine and ATP through an activated gamma-phospho-Glu-tRNA(Gln). This is Glutamyl-tRNA(Gln) amidotransferase subunit A from Staphylococcus carnosus (strain TM300).